The primary structure comprises 249 residues: MHTLVLVRHGQSVWNLENRFTGWTDVGLTPQGREEAAQAANLLRDGGYDFDACLTSVLSRAVMTLDILLTGLDRLWLPVTKSWRLNERHYGGLQGLNKAEMAAQYGEEQVFVWRRSYDTPPPALDPADERFPGRDRRYATLTDAELPRCESLKDTVARVMPFWHDVMAPAIASGTRLLVAAHGNSLRALVKYLDAIGDDAISECNIPTGVPLIYKLDASLKPLEHFYLGDAEAVARKAAAVAAQGKAKG.

Substrate-binding positions include 8-15 (RHGQSVWN), 21-22 (TG), Arg60, 87-90 (ERHY), Lys98, 114-115 (RR), and 183-184 (GN). The active-site Tele-phosphohistidine intermediate is the His9. Glu87 functions as the Proton donor/acceptor in the catalytic mechanism.

This sequence belongs to the phosphoglycerate mutase family. BPG-dependent PGAM subfamily. Homodimer.

The enzyme catalyses (2R)-2-phosphoglycerate = (2R)-3-phosphoglycerate. It functions in the pathway carbohydrate degradation; glycolysis; pyruvate from D-glyceraldehyde 3-phosphate: step 3/5. Its function is as follows. Catalyzes the interconversion of 2-phosphoglycerate and 3-phosphoglycerate. The polypeptide is 2,3-bisphosphoglycerate-dependent phosphoglycerate mutase (Solidesulfovibrio magneticus (strain ATCC 700980 / DSM 13731 / RS-1) (Desulfovibrio magneticus)).